A 256-amino-acid polypeptide reads, in one-letter code: 1-(5-phosphoribosyl)-5-[(5-phosphoribosylamino)methylideneamino] imidazole-4-carboxamide isomerase (256 aa).

Asp-8 (proton acceptor) is an active-site residue. Residue Asp-129 is the Proton donor of the active site.

The protein belongs to the HisA/HisF family.

The protein localises to the cytoplasm. It carries out the reaction 1-(5-phospho-beta-D-ribosyl)-5-[(5-phospho-beta-D-ribosylamino)methylideneamino]imidazole-4-carboxamide = 5-[(5-phospho-1-deoxy-D-ribulos-1-ylimino)methylamino]-1-(5-phospho-beta-D-ribosyl)imidazole-4-carboxamide. It functions in the pathway amino-acid biosynthesis; L-histidine biosynthesis; L-histidine from 5-phospho-alpha-D-ribose 1-diphosphate: step 4/9. This Picosynechococcus sp. (strain ATCC 27264 / PCC 7002 / PR-6) (Agmenellum quadruplicatum) protein is 1-(5-phosphoribosyl)-5-[(5-phosphoribosylamino)methylideneamino] imidazole-4-carboxamide isomerase.